The primary structure comprises 293 residues: Elongation factor Ts (293 aa).

Residues T80–V83 form an involved in Mg(2+) ion dislocation from EF-Tu region.

It belongs to the EF-Ts family.

It is found in the cytoplasm. In terms of biological role, associates with the EF-Tu.GDP complex and induces the exchange of GDP to GTP. It remains bound to the aminoacyl-tRNA.EF-Tu.GTP complex up to the GTP hydrolysis stage on the ribosome. The polypeptide is Elongation factor Ts (Herminiimonas arsenicoxydans).